We begin with the raw amino-acid sequence, 171 residues long: SPbeta prophage-derived uncharacterized protein YokC (171 aa).

In Bacillus subtilis (strain 168), this protein is SPbeta prophage-derived uncharacterized protein YokC (yokC).